The following is a 324-amino-acid chain: Succinylglutamate desuccinylase (324 aa).

Residues His53, Glu56, and His148 each contribute to the Zn(2+) site. Glu211 is an active-site residue.

The protein belongs to the AspA/AstE family. Succinylglutamate desuccinylase subfamily. Requires Zn(2+) as cofactor.

It catalyses the reaction N-succinyl-L-glutamate + H2O = L-glutamate + succinate. Its pathway is amino-acid degradation; L-arginine degradation via AST pathway; L-glutamate and succinate from L-arginine: step 5/5. Functionally, transforms N(2)-succinylglutamate into succinate and glutamate. The chain is Succinylglutamate desuccinylase from Acinetobacter baumannii (strain AB0057).